The chain runs to 638 residues: MGKIIGIDLGTTNSCVAVLDGGKARVIENAEGDRTTPSIIAYTDDEIIVGQPAKRQAVTNPTNTFFAIKRLIGRRFKDDEVQRDVNIMPFKIIGADNGDAWVESRGNKMAPPQVSAEILKKMKKTAEDFLGEEVTEAVITVPAYFNDSQRQATKDAGRIAGLDVKRIINEPTAAALAYGIDKKQGDNIVAVYDLGGGTFDISIIEIDSNDGDQTFEVLATNGDTHLGGEDFDNRMINYLADEFKKDQGLDLRRDPLAMQRLKEAAEKAKIELSSTNHTEVNLPYITADASGPKHLVVKITRAKLESLVEDLIQRTLEPLKVALADADLSISDINEVILVGGQTRMPKVQEAVTNFFGKEPRKDVNPDEAVAVGAAIQAGVLSGEVKDVLLLDVTPLSLGIETMGSVMTKLIEKNTTIPTKAQQVFSTADDNQSAVTIHVLQGERKQASANKSLGQFNLEGIEPAPRGQPQVEVMFDIDADGILHVSATDKKTGKKQNITIKASSGLSDEEVEQMVRDAEAHADEDAKFEELVQARNQADGLAHSTKKQVEEAGDALASDEKEKIEAAIATLETAIKGKDKEAIDTATQALIEASAKLMEIAQAKAQGEAEGQAHDAGQEKPADDVVDAEFEEVKDDKK.

Phosphothreonine; by autocatalysis is present on T198. Disordered stretches follow at residues 539–559 (DGLA…LASD) and 602–638 (QAKA…DDKK). Residues 611 to 623 (GQAHDAGQEKPAD) show a composition bias toward basic and acidic residues. Residues 624–638 (DVVDAEFEEVKDDKK) are compositionally biased toward acidic residues.

The protein belongs to the heat shock protein 70 family.

Its function is as follows. Acts as a chaperone. The polypeptide is Chaperone protein DnaK (Shewanella frigidimarina (strain NCIMB 400)).